The primary structure comprises 191 residues: Ubiquinol-cytochrome c reductase iron-sulfur subunit (191 aa).

The chain crosses the membrane as a helical span at residues 18–35 (ATAATGVVVTGAAVWPLI). The Rieske domain maps to 94–189 (RDTSAENANK…AAFVDETTIK (96 aa)). The segment at 95 to 116 (DTSAENANKPGAEATDENRTLP) is disordered. Residues Cys133, His135, Cys153, and His156 each contribute to the [2Fe-2S] cluster site. Cys138 and Cys155 are disulfide-bonded.

Belongs to the Rieske iron-sulfur protein family. In terms of assembly, the main subunits of complex b-c1 are: cytochrome b, cytochrome c1 and the Rieske protein. [2Fe-2S] cluster serves as cofactor.

Its subcellular location is the cell membrane. The catalysed reaction is a quinol + 2 Fe(III)-[cytochrome c](out) = a quinone + 2 Fe(II)-[cytochrome c](out) + 2 H(+)(out). Component of the ubiquinol-cytochrome c reductase complex (complex III or cytochrome b-c1 complex), which is a respiratory chain that generates an electrochemical potential coupled to ATP synthesis. The polypeptide is Ubiquinol-cytochrome c reductase iron-sulfur subunit (petA) (Rhodobacter capsulatus (strain ATCC BAA-309 / NBRC 16581 / SB1003)).